Consider the following 188-residue polypeptide: Elongation factor P (188 aa).

This sequence belongs to the elongation factor P family.

The protein resides in the cytoplasm. The protein operates within protein biosynthesis; polypeptide chain elongation. Involved in peptide bond synthesis. Stimulates efficient translation and peptide-bond synthesis on native or reconstituted 70S ribosomes in vitro. Probably functions indirectly by altering the affinity of the ribosome for aminoacyl-tRNA, thus increasing their reactivity as acceptors for peptidyl transferase. The polypeptide is Elongation factor P (Rickettsia massiliae (strain Mtu5)).